Here is a 419-residue protein sequence, read N- to C-terminus: Protein farnesyltransferase subunit beta (419 aa).

PFTB repeat units follow at residues 68–109 (EDNT…ITLG), 119–160 (RNKL…SVLN), 167–208 (IKNV…ILIG), 215–256 (LPRL…ALLQ), and 329–371 (SIAL…SLCQ). (2E,6E)-farnesyl diphosphate contacts are provided by residues 193 to 196 (HGGY) and 235 to 238 (RTNK). Zn(2+)-binding residues include D241 and C243. 244–247 (YSFW) lines the (2E,6E)-farnesyl diphosphate pocket. H359 lines the Zn(2+) pocket.

The protein belongs to the protein prenyltransferase subunit beta family. As to quaternary structure, heterodimer of FTA and FTB. It depends on Zn(2+) as a cofactor.

The catalysed reaction is L-cysteinyl-[protein] + (2E,6E)-farnesyl diphosphate = S-(2E,6E)-farnesyl-L-cysteinyl-[protein] + diphosphate. Functionally, catalyzes the transfer of a farnesyl moiety from farnesyl diphosphate to a cysteine at the fourth position from the C-terminus of several proteins. The beta subunit FTB is responsible for peptide-binding. The polypeptide is Protein farnesyltransferase subunit beta (FTB) (Pisum sativum (Garden pea)).